A 349-amino-acid chain; its full sequence is Paired box protein Pax-4 (349 aa).

A DNA-binding region (paired) is located at residues 5–131 (GLSSVNQLGG…SSINRVLRAL (127 aa)). Positions 8–64 (SVNQLGGLFVNGRPLPLDTRQQIVQLAIRGMRPCDISRSLKVSNGCVSKILGRYYRT) are PAI subdomain. The tract at residues 83–131 (AVVARIAQLKDEYPALFAWEIQHQLCTEGLCTQDKAPSVSSINRVLRAL) is RED subdomain. A DNA-binding region (homeobox) is located at residues 170–229 (SHRNRTIFSPGQAEALEKEFQRGQYPDSVARGKLAAATSLPEDTVRVWFSNRRAKWRRQE). The segment at 278-349 (FCQLCCGTAP…VPSTHCSNWP (72 aa)) is transcription repression.

Belongs to the paired homeobox family. In terms of tissue distribution, expressed in early pancreas. Later restricted to beta cells. Undetectable in adult islets.

It localises to the nucleus. Plays an important role in the differentiation and development of pancreatic islet beta cells. Transcriptional repressor that competes with PAX6 in binding to a common element in the glucagon, insulin and somatostatin promoters. This Mus musculus (Mouse) protein is Paired box protein Pax-4 (Pax4).